A 351-amino-acid chain; its full sequence is Biotin synthase (351 aa).

The region spanning 48 to 265 (NKVRIHILDN…LCMFRLINPD (218 aa)) is the Radical SAM core domain. Cys-63, Cys-67, and Cys-70 together coordinate [4Fe-4S] cluster. Residues Cys-107, Cys-139, Cys-199, and Arg-269 each coordinate [2Fe-2S] cluster.

This sequence belongs to the radical SAM superfamily. Biotin synthase family. As to quaternary structure, homodimer. The cofactor is [4Fe-4S] cluster. [2Fe-2S] cluster is required as a cofactor.

It catalyses the reaction (4R,5S)-dethiobiotin + (sulfur carrier)-SH + 2 reduced [2Fe-2S]-[ferredoxin] + 2 S-adenosyl-L-methionine = (sulfur carrier)-H + biotin + 2 5'-deoxyadenosine + 2 L-methionine + 2 oxidized [2Fe-2S]-[ferredoxin]. The protein operates within cofactor biosynthesis; biotin biosynthesis; biotin from 7,8-diaminononanoate: step 2/2. Catalyzes the conversion of dethiobiotin (DTB) to biotin by the insertion of a sulfur atom into dethiobiotin via a radical-based mechanism. The chain is Biotin synthase from Leptospira interrogans serogroup Icterohaemorrhagiae serovar copenhageni (strain Fiocruz L1-130).